The sequence spans 91 residues: Large ribosomal subunit protein uL23 (91 aa).

This sequence belongs to the universal ribosomal protein uL23 family. Part of the 50S ribosomal subunit. Contacts protein L29, and trigger factor when it is bound to the ribosome.

Its function is as follows. One of the early assembly proteins it binds 23S rRNA. One of the proteins that surrounds the polypeptide exit tunnel on the outside of the ribosome. Forms the main docking site for trigger factor binding to the ribosome. The sequence is that of Large ribosomal subunit protein uL23 from Staphylococcus aureus (strain USA300).